Here is a 52-residue protein sequence, read N- to C-terminus: EDLQGDAVPEEXATKDDNEHPQTLLLTNVEFNXRPFVLIIYDRNTKSPLFVG.

Residues 1 to 20 form a disordered region; it reads EDLQGDAVPEEXATKDDNEH.

It belongs to the serpin family. N-glycosylated; contains glycans with bi- and triantennary side chains. As to expression, plasma.

The protein localises to the secreted. The polypeptide is Alpha-1-antiproteinase 3 (Equus caballus (Horse)).